A 708-amino-acid chain; its full sequence is Potassium-transporting ATPase ATP-binding subunit 2 (708 aa).

The segment at 1–23 (MRSPSRLPHETRDSRQRTPKTDM) is disordered. Residues 7–23 (LPHETRDSRQRTPKTDM) are compositionally biased toward basic and acidic residues. 4 helical membrane passes run 49 to 69 (MFIV…PNLF), 84 to 104 (GLIT…EAVA), 235 to 255 (IALT…VATM), and 283 to 303 (SIAI…GGLL). The 4-aspartylphosphate intermediate role is filled by Asp339. Residues Asp376, Glu380, 407–414 (FSAKTRMS), and Lys426 contribute to the ATP site. Positions 549 and 553 each coordinate Mg(2+). 3 helical membrane-spanning segments follow: residues 619-639 (FAIL…IMGL), 645-665 (AIIS…PLAL), and 683-703 (IFIY…LIDV).

The protein belongs to the cation transport ATPase (P-type) (TC 3.A.3) family. Type IA subfamily. In terms of assembly, the system is composed of three essential subunits: KdpA, KdpB and KdpC.

The protein resides in the cell inner membrane. The enzyme catalyses K(+)(out) + ATP + H2O = K(+)(in) + ADP + phosphate + H(+). Part of the high-affinity ATP-driven potassium transport (or Kdp) system, which catalyzes the hydrolysis of ATP coupled with the electrogenic transport of potassium into the cytoplasm. This subunit is responsible for energy coupling to the transport system and for the release of the potassium ions to the cytoplasm. The polypeptide is Potassium-transporting ATPase ATP-binding subunit 2 (Nostoc sp. (strain PCC 7120 / SAG 25.82 / UTEX 2576)).